A 456-amino-acid chain; its full sequence is Tyrosinase-like protein 2 (456 aa).

Positions M1–C22 are cleaved as a signal peptide. Residues H145, H154, H163, H295, H299, and H322 each contribute to the Cu cation site.

It depends on Cu(2+) as a cofactor. Prismatic layer of shell (at protein level).

It is found in the secreted. The chain is Tyrosinase-like protein 2 from Margaritifera margaritifera (Freshwater pearl mussel).